The following is a 284-amino-acid chain: MLSKQIPLGIYEKALPAGECWLERLRLAKTLGFDFVEMSVDETDARLARLDWSREQRLALVSAVAETGVRVPSMCLSAHRRFPLGSEDDAVRAQGLEIMRKAIQFAQDVGIRVIQLAGYDVYYQQANDETRCRFRDGLKESVDMASRAQVTLAMEIMDYPLMNSISKALGYAHYLNNPWFQLYPDIGNLSAWDNDVQMELQAGSGHIVAVHVKDTKPGVFKNVPFGEGVVDFERCFETLKQSGYCGPYLIEMWSETAENPAAEVAKARDWVKARMAKAGMVEAA.

It belongs to the L-ribulose-5-phosphate 3-epimerase family.

It carries out the reaction L-ribulose 5-phosphate = L-xylulose 5-phosphate. It functions in the pathway cofactor degradation; L-ascorbate degradation; D-xylulose 5-phosphate from L-ascorbate: step 3/4. In terms of biological role, catalyzes the isomerization of L-xylulose-5-phosphate to L-ribulose-5-phosphate. Is involved in the anaerobic L-ascorbate utilization. This Salmonella paratyphi A (strain AKU_12601) protein is L-ribulose-5-phosphate 3-epimerase UlaE.